The following is a 166-amino-acid chain: Putative 4-hydroxy-4-methyl-2-oxoglutarate aldolase (166 aa).

Substrate contacts are provided by residues 74–77 and R96; that span reads GDQI. D97 is an a divalent metal cation binding site.

It belongs to the class II aldolase/RraA-like family. In terms of assembly, homotrimer. A divalent metal cation is required as a cofactor.

It catalyses the reaction 4-hydroxy-4-methyl-2-oxoglutarate = 2 pyruvate. The enzyme catalyses oxaloacetate + H(+) = pyruvate + CO2. Functionally, catalyzes the aldol cleavage of 4-hydroxy-4-methyl-2-oxoglutarate (HMG) into 2 molecules of pyruvate. Also contains a secondary oxaloacetate (OAA) decarboxylase activity due to the common pyruvate enolate transition state formed following C-C bond cleavage in the retro-aldol and decarboxylation reactions. The protein is Putative 4-hydroxy-4-methyl-2-oxoglutarate aldolase of Xanthomonas campestris pv. campestris (strain 8004).